A 263-amino-acid polypeptide reads, in one-letter code: Acetylglutamate kinase (263 aa).

Residues 48 to 49, R70, and N162 each bind substrate; that span reads GG.

The protein belongs to the acetylglutamate kinase family. ArgB subfamily.

It localises to the cytoplasm. It catalyses the reaction N-acetyl-L-glutamate + ATP = N-acetyl-L-glutamyl 5-phosphate + ADP. It participates in amino-acid biosynthesis; L-arginine biosynthesis; N(2)-acetyl-L-ornithine from L-glutamate: step 2/4. Its function is as follows. Catalyzes the ATP-dependent phosphorylation of N-acetyl-L-glutamate. The polypeptide is Acetylglutamate kinase (Shewanella sediminis (strain HAW-EB3)).